Consider the following 293-residue polypeptide: 4-diphosphocytidyl-2-C-methyl-D-erythritol kinase (293 aa).

Lys16 is a catalytic residue. Residue 99 to 109 coordinates ATP; it reads PMGAGLGGGSS. The active site involves Asp141.

Belongs to the GHMP kinase family. IspE subfamily.

The enzyme catalyses 4-CDP-2-C-methyl-D-erythritol + ATP = 4-CDP-2-C-methyl-D-erythritol 2-phosphate + ADP + H(+). The protein operates within isoprenoid biosynthesis; isopentenyl diphosphate biosynthesis via DXP pathway; isopentenyl diphosphate from 1-deoxy-D-xylulose 5-phosphate: step 3/6. In terms of biological role, catalyzes the phosphorylation of the position 2 hydroxy group of 4-diphosphocytidyl-2C-methyl-D-erythritol. This is 4-diphosphocytidyl-2-C-methyl-D-erythritol kinase from Paraburkholderia xenovorans (strain LB400).